Consider the following 104-residue polypeptide: Pterin-4-alpha-carbinolamine dehydratase (104 aa).

Ala2 is modified (N-acetylalanine). Substrate contacts are provided by residues 61-63 and 78-81; these read DHH and STHE.

This sequence belongs to the pterin-4-alpha-carbinolamine dehydratase family. As to quaternary structure, homotetramer and homodimer. The major tissues expressing cDcoH are hypothalamus, kidney and liver.

Its subcellular location is the cytoplasm. It is found in the nucleus. It catalyses the reaction (4aS,6R)-4a-hydroxy-L-erythro-5,6,7,8-tetrahydrobiopterin = (6R)-L-erythro-6,7-dihydrobiopterin + H2O. Functionally, involved in tetrahydrobiopterin biosynthesis. Seems to both prevent the formation of 7-pterins and accelerate the formation of quinonoid-BH2. Coactivator for HNF1A-dependent transcription. Regulates the dimerization of homeodomain protein HNF1A and enhances its transcriptional activity. Also acts as a coactivator for HNF1B-dependent transcription. The protein is Pterin-4-alpha-carbinolamine dehydratase (PCBD1) of Gallus gallus (Chicken).